We begin with the raw amino-acid sequence, 140 residues long: Transmembrane protein 107 (140 aa).

2 consecutive transmembrane segments (helical) span residues 7 to 27 (LVPS…TLFW) and 53 to 73 (LVAA…GFLS). Residue N79 is glycosylated (N-linked (GlcNAc...) asparagine). Helical transmembrane passes span 83–103 (SLLS…FIFE) and 113–133 (IFAF…IAVF).

As to quaternary structure, part of the tectonic-like complex (also named B9 complex). Interacts with TMEM237, TMEM231, MKS1 and TMEM216.

The protein localises to the membrane. It is found in the cell projection. The protein resides in the cilium. In terms of biological role, plays a role in cilia formation and embryonic patterning. Requires for normal Sonic hedgehog (Shh) signaling in the neural tube and acts in combination with GLI2 and GLI3 to pattern ventral and intermediate neuronal cell types. During ciliogenesis regulates the ciliary transition zone localization of some MKS complex proteins. The sequence is that of Transmembrane protein 107 from Rattus norvegicus (Rat).